The sequence spans 320 residues: Glycerol-3-phosphate dehydrogenase [NAD(P)+] (320 aa).

The NADPH site is built by Phe11, Arg30, and Lys102. Lys102, Gly130, and Ser132 together coordinate sn-glycerol 3-phosphate. NADPH is bound at residue Ala134. Residues Lys185, Asp238, Ser248, Arg249, and Asn250 each contribute to the sn-glycerol 3-phosphate site. Lys185 serves as the catalytic Proton acceptor. Residue Arg249 coordinates NADPH. Glu270 lines the NADPH pocket.

Belongs to the NAD-dependent glycerol-3-phosphate dehydrogenase family.

The protein resides in the cytoplasm. It catalyses the reaction sn-glycerol 3-phosphate + NAD(+) = dihydroxyacetone phosphate + NADH + H(+). The catalysed reaction is sn-glycerol 3-phosphate + NADP(+) = dihydroxyacetone phosphate + NADPH + H(+). Its pathway is membrane lipid metabolism; glycerophospholipid metabolism. Its function is as follows. Catalyzes the reduction of the glycolytic intermediate dihydroxyacetone phosphate (DHAP) to sn-glycerol 3-phosphate (G3P), the key precursor for phospholipid synthesis. In Roseobacter denitrificans (strain ATCC 33942 / OCh 114) (Erythrobacter sp. (strain OCh 114)), this protein is Glycerol-3-phosphate dehydrogenase [NAD(P)+].